The sequence spans 162 residues: Zinc finger protein 593 homolog (162 aa).

Residues 59-83 form a C2H2-type zinc finger; sequence FYCVHCAKYFIDDTAMQAHFRTKVH. A disordered region spans residues 110–162; it reads VKPKKRAMETQPSKEDVVAGKRIRVEVVPEDTDATDSPSTSKTKRKKVEKMET. A compositionally biased stretch (basic and acidic residues) spans 115 to 136; it reads RAMETQPSKEDVVAGKRIRVEV. The span at 151–162 shows a compositional bias: basic residues; it reads KTKRKKVEKMET.

Belongs to the ZNF593/BUD20 C2H2-type zinc-finger protein family. Associates with pre-60S ribosomal particles; released from the pre-60S particle very early in the cytoplasm.

The protein resides in the nucleus. It is found in the cytoplasm. In terms of biological role, involved in pre-60S ribosomal particles maturation by promoting the nuclear export of the 60S ribosome. This Drosophila melanogaster (Fruit fly) protein is Zinc finger protein 593 homolog.